Consider the following 296-residue polypeptide: Bifunctional protein FolD (296 aa).

NADP(+) contacts are provided by residues 166 to 168 (GRS), serine 195, and isoleucine 236.

The protein belongs to the tetrahydrofolate dehydrogenase/cyclohydrolase family. Homodimer.

It carries out the reaction (6R)-5,10-methylene-5,6,7,8-tetrahydrofolate + NADP(+) = (6R)-5,10-methenyltetrahydrofolate + NADPH. It catalyses the reaction (6R)-5,10-methenyltetrahydrofolate + H2O = (6R)-10-formyltetrahydrofolate + H(+). The protein operates within one-carbon metabolism; tetrahydrofolate interconversion. Catalyzes the oxidation of 5,10-methylenetetrahydrofolate to 5,10-methenyltetrahydrofolate and then the hydrolysis of 5,10-methenyltetrahydrofolate to 10-formyltetrahydrofolate. This chain is Bifunctional protein FolD, found in Chlorobium limicola (strain DSM 245 / NBRC 103803 / 6330).